The chain runs to 195 residues: Adenylate kinase (195 aa).

8–16 lines the ATP pocket; the sequence is GIPGVGKTT.

This sequence belongs to the archaeal adenylate kinase family. In terms of assembly, homotrimer.

It is found in the cytoplasm. The enzyme catalyses AMP + ATP = 2 ADP. This chain is Adenylate kinase (adkA), found in Saccharolobus solfataricus (strain ATCC 35092 / DSM 1617 / JCM 11322 / P2) (Sulfolobus solfataricus).